The chain runs to 382 residues: Phosphatidylglycerol--prolipoprotein diacylglyceryl transferase (382 aa).

The next 3 membrane-spanning stretches (helical) occupy residues 18–38 (IQWY…MFVF), 53–73 (FFIF…SFVI), and 91–111 (LAIQ…FNFF). R162 is a binding site for a 1,2-diacyl-sn-glycero-3-phospho-(1'-sn-glycerol). A run of 4 helical transmembrane segments spans residues 213–233 (IPLF…IYFV), 243–263 (GTIG…LENF), 274–294 (ITTS…CQFI), and 302–322 (FWTY…TTLF).

Belongs to the Lgt family.

It localises to the cell membrane. It carries out the reaction L-cysteinyl-[prolipoprotein] + a 1,2-diacyl-sn-glycero-3-phospho-(1'-sn-glycerol) = an S-1,2-diacyl-sn-glyceryl-L-cysteinyl-[prolipoprotein] + sn-glycerol 1-phosphate + H(+). Its pathway is protein modification; lipoprotein biosynthesis (diacylglyceryl transfer). Functionally, catalyzes the transfer of the diacylglyceryl group from phosphatidylglycerol to the sulfhydryl group of the N-terminal cysteine of a prolipoprotein, the first step in the formation of mature lipoproteins. The sequence is that of Phosphatidylglycerol--prolipoprotein diacylglyceryl transferase from Mycoplasma genitalium (strain ATCC 33530 / DSM 19775 / NCTC 10195 / G37) (Mycoplasmoides genitalium).